The primary structure comprises 618 residues: MNDLQLSAELALFLTKLPSEPGIYRMLDEEGTVLYVGKAANLKKRVNSYFSKQNTGVKTRALVSQIKSIEISVTRSETEALLLESNLIKALRPKYNVLLRDDKSYPYIHLSNHPDFPRIELYRSKKKPPSGNFFGPYPGVAAVRETIVTIQKIFKIRNCRDSYFKARSRPCLQYQIKRCTAPCVHYISPENYKLSVEDAIRFLQGKCQIILDALAERMKQAVNQLNFEEAAVLRDQIKNLRLIQEQQGVVQLRGDADVIAIEVRPGFACIQCVTIREGQVLNSQSFFPTVPYAVLDEELDANSLWQQTFEAFIGFYYLDTTERIPDLIITNQSITESRSLEYILSQRRGKSCKIQVNPRGVKSRWMDFAVNNLRISVAEYVSKHSTIRSRYQALKQLLALDKNIERMECFDISHTQGEATVASCVVFDTEGPRPSEYRRFNIEGITPGDDYAAMEQAVTRRFKRLIDAQLLPDVLIIDGGKGQVSIVKRVLTSLGVEDITLLGVSKGPSRKAGWEKLILVNENREFVLPEDSKALHLLQHIRDEAHRFAITAHRKKRQKTRVESTLESIEGVGAKRRQALLQRFGGLRELAKAPLEEICKVQGISEQLAKRIHEHFHP.

One can recognise a GIY-YIG domain in the interval 19–97; sequence SEPGIYRMLD…IKALRPKYNV (79 aa). The UVR domain occupies 208–243; sequence QIILDALAERMKQAVNQLNFEEAAVLRDQIKNLRLI.

It belongs to the UvrC family. Interacts with UvrB in an incision complex.

It is found in the cytoplasm. Functionally, the UvrABC repair system catalyzes the recognition and processing of DNA lesions. UvrC both incises the 5' and 3' sides of the lesion. The N-terminal half is responsible for the 3' incision and the C-terminal half is responsible for the 5' incision. The chain is UvrABC system protein C from Legionella pneumophila (strain Paris).